The sequence spans 131 residues: Hypocretin neuropeptide precursor (131 aa).

Glutamine 34 is modified (pyrrolidone carboxylic acid). 2 cysteine pairs are disulfide-bonded: cysteine 39–cysteine 45 and cysteine 40–cysteine 47. The residue at position 66 (leucine 66) is a Leucine amide. A disordered region spans residues glutamate 104 to valine 131.

It belongs to the orexin family.

The protein resides in the rough endoplasmic reticulum. Its subcellular location is the cytoplasmic vesicle. The protein localises to the synapse. Neuropeptides that play a significant role in the regulation of food intake and sleep-wakefulness, possibly by coordinating the complex behavioral and physiologic responses of these complementary homeostatic functions. A broader role in the homeostatic regulation of energy metabolism, autonomic function, hormonal balance and the regulation of body fluids, is also suggested. In terms of biological role, binds to orexin receptors HCRTR1/OX1R and HCRTR2/OX2R with a high affinity. Stimulates food intake. Modulates pituitary luteinizing hormone secretion in an ovarian steroid-dependent manner. Functionally, binds to orexin receptor HCRTR2/OX2R only. Stimulates food intake. Modulates pituitary luteinizing hormone secretion in an ovarian steroid-dependent manner. The polypeptide is Hypocretin neuropeptide precursor (HCRT) (Bos taurus (Bovine)).